Consider the following 825-residue polypeptide: MKILKLPWLTHQEGQRNYEIYTVDVSSDGQRVATGGLDGKIRIWSVADILVFAKPKVSWPAREEQLRKPLANMSRHTGSVTALKFSPDNKYLASGSDDKILLIWEKEEGAVQPLFDMENDLEHWNVRRRLVAHDNDIQDICWAPDSSILVTVGLDRSIIVWNGSTFEKIKRFDVHQSHVKGVVFDPANKYFATASDDRTVKVFRYHKGTDLSFTIEHIITEPFQGSPLTTYFRRLSWSPDGQHIAVPNATNGPVSTVAIISRGNWDTSVSLVGHDQPTEVACFNPRLFEHNDNHERGEEVDGASKDNSAASESSGKRRLKDDDRVDSVIATAGQDKTLAVWSTSRARPIFVAYDLTSKSVTDIAWTCDGTALFLTSLDGRIIVITFEEGELGKAIPLEQNVEQLHRYGVDKDSLVFPESVKQLILEDKARQYKKPYIETTLLESRIGTVKKPNVLNPRPKHAKNDVAVASIPQAQAPALKKKEGPLNAATVQNGKKRVAPTLISTGYARAATVKFEPRSSIDSDFAGKKEPLKDTSYALAGKISQPSLPLPRLGVHTLIMGVKERGAERFYVEDEESMDDDAEVADEEDETKNEHPLTLNLKTTPERVWKDEPNLRYLEYPGVIPDADVVICQYGDLDDLHILEIRNGVERSIQFDREALFENPTKILGYHQGERTLEAFLPEVVISCVGSKACQCWALATASGSLYIYGNHGQLLVPKISIGHKVIKLIAWQHFVIAFTETCLFWIWDIRAMKLVEKEISVLPVLVQDQPQCNRVRISRRILDFRMLADSHELLVEMSDGASYVWKRALGCWTDTIGQSTPVTA.

5 WD repeats span residues 15–54 (QRNY…VFAK), 75–114 (RHTG…VQPL), 132–171 (AHDN…KIKR), 174–213 (VHQS…DLSF), and 227–270 (PLTT…TSVS). The span at 294-304 (HERGEEVDGAS) shows a compositional bias: basic and acidic residues. The segment at 294-320 (HERGEEVDGASKDNSAASESSGKRRLK) is disordered. WD repeat units lie at residues 309 to 351 (AASE…PIFV) and 355 to 396 (LTSK…KAIP). The span at 574 to 591 (DEESMDDDAEVADEEDET) shows a compositional bias: acidic residues. The interval 574–595 (DEESMDDDAEVADEEDETKNEH) is disordered.

Belongs to the WD repeat HIR1 family.

Its subcellular location is the nucleus. Required for replication-independent chromatin assembly and for the periodic repression of histone gene transcription during the cell cycle. This Eremothecium gossypii (strain ATCC 10895 / CBS 109.51 / FGSC 9923 / NRRL Y-1056) (Yeast) protein is Protein HIR1 (HIR1).